Reading from the N-terminus, the 311-residue chain is Ornithine carbamoyltransferase (311 aa).

Residues S56–T59, Q83, R107, and H134–Q137 contribute to the carbamoyl phosphate site. L-ornithine is bound by residues N166, D230, and S234–M235. Residues C270–L271 and K298 each bind carbamoyl phosphate.

Belongs to the aspartate/ornithine carbamoyltransferase superfamily. OTCase family.

It localises to the cytoplasm. The catalysed reaction is carbamoyl phosphate + L-ornithine = L-citrulline + phosphate + H(+). The protein operates within amino-acid degradation; L-arginine degradation via ADI pathway; carbamoyl phosphate from L-arginine: step 2/2. Reversibly catalyzes the transfer of the carbamoyl group from carbamoyl phosphate (CP) to the N(epsilon) atom of ornithine (ORN) to produce L-citrulline. The sequence is that of Ornithine carbamoyltransferase from Ignicoccus hospitalis (strain KIN4/I / DSM 18386 / JCM 14125).